A 1516-amino-acid chain; its full sequence is UDP-glucose:glycoprotein glucosyltransferase 2 (1516 aa).

The first 27 residues, 1-27 (MAPAKATNVVRLLLGSTALWLSQLGSG), serve as a signal peptide directing secretion. 4 N-linked (GlcNAc...) asparagine glycosylation sites follow: asparagine 256, asparagine 286, asparagine 920, and asparagine 950. Positions 1220 to 1516 (LHKENKKEKD…QDTILTHDEL (297 aa)) are glucosyltransferase. Residue tyrosine 1289 is modified to Phosphotyrosine. Positions 1513–1516 (HDEL) match the Prevents secretion from ER motif.

The protein belongs to the glycosyltransferase 8 family. As to quaternary structure, interacts with METTL23. Interacts with SELENOF. The cofactor is Ca(2+). It depends on Mn(2+) as a cofactor. In terms of tissue distribution, higher levels in kidney, pancreas, heart, and skeletal muscle.

The protein localises to the endoplasmic reticulum lumen. The protein resides in the endoplasmic reticulum-Golgi intermediate compartment. The catalysed reaction is N(4)-(alpha-D-Man-(1-&gt;2)-alpha-D-Man-(1-&gt;2)-alpha-D-Man-(1-&gt;3)-[alpha-D-Man-(1-&gt;2)-alpha-D-Man-(1-&gt;3)-[alpha-D-Man-(1-&gt;2)-alpha-D-Man-(1-&gt;6)]-alpha-D-Man-(1-&gt;6)]-beta-D-Man-(1-&gt;4)-beta-D-GlcNAc-(1-&gt;4)-beta-D-GlcNAc)-L-asparaginyl-[protein] (N-glucan mannose isomer 9A1,2,3B1,2,3) + UDP-alpha-D-glucose = N(4)-(alpha-D-Glc-(1-&gt;3)-alpha-D-Man-(1-&gt;2)-alpha-D-Man-(1-&gt;2)-alpha-D-Man-(1-&gt;3)-[alpha-D-Man-(1-&gt;2)-alpha-D-Man-(1-&gt;3)-[alpha-D-Man-(1-&gt;2)-alpha-D-Man-(1-&gt;6)]-alpha-D-Man-(1-&gt;6)]-beta-D-Man-(1-&gt;4)-beta-D-GlcNAc-(1-&gt;4)-beta-D-GlcNAc)-L-asparaginyl-[protein] + UDP + H(+). The protein operates within protein modification; protein glycosylation. Its activity is regulated as follows. Ethylenediaminetetraacetic acid completely abolishes catalytic activity. Catalytic activity is enhanced by complex formation with SELENOF. Functionally, recognizes glycoproteins with minor folding defects. Reglucosylates single N-glycans near the misfolded part of the protein, thus providing quality control for protein folding in the endoplasmic reticulum. Reglucosylated proteins are recognized by calreticulin for recycling to the endoplasmic reticulum and refolding or degradation. The sequence is that of UDP-glucose:glycoprotein glucosyltransferase 2 (UGGT2) from Homo sapiens (Human).